The sequence spans 303 residues: uncharacterized protein (303 aa).

The N-terminal stretch at 1 to 24 (MNRIALVFLYSLFLFNLAIGRVES) is a signal peptide. N-linked (GlcNAc...) asparagine glycosylation is present at N116. The segment at 124–179 (FTRQQQKKSHDDDDDDDDSDSDESKEEEEKKKRDRKHRRDKRQAITQGSQNNTDPN) is disordered. Acidic residues predominate over residues 135 to 149 (DDDDDDDSDSDESKE). The segment covering 155–164 (KRDRKHRRDK) has biased composition (basic residues). The segment covering 167-178 (AITQGSQNNTDP) has biased composition (polar residues).

This is an uncharacterized protein from Caenorhabditis elegans.